Reading from the N-terminus, the 1112-residue chain is Rho GTPase-activating protein 7 (1112 aa).

In terms of domain architecture, SAM spans 37–104 (LAEIEAKEAC…LNKCAVMKLE (68 aa)). A phosphoserine mark is found at Ser-112, Ser-115, and Ser-155. Disordered regions lie at residues 146–203 (SPKQ…APAR), 318–350 (RSIS…RTRS), 405–459 (PKAL…VSSR), and 512–574 (SDEG…GVGA). The segment covering 183 to 193 (VHSTGSLTTHA) has biased composition (polar residues). The tract at residues 296-468 (QLNCVEISAL…RLSIYDNVPG (173 aa)) is focal adhesion-targeting (FAT). 2 stretches are compositionally biased toward low complexity: residues 320–348 (ISSS…VTRT) and 409–423 (SNGS…SSVN). Ser-343 is modified (phosphoserine). Residues 437-446 (LRRENSSPKE) are compositionally biased toward basic and acidic residues. Positions 520–532 (ALDSVSPCPSSPK) are enriched in polar residues. Residues 534-544 (IHLDVDNDRAT) show a composition bias toward basic and acidic residues. Residues 547–556 (DLDSTGNSLN) show a composition bias toward polar residues. Positions 635 to 657 (KHGFSWAVPKFMKRIKVPDYKDR) are polybasic cluster (PBR). Residues 662–868 (VPLTVNVQRT…HMIAECKKLF (207 aa)) form the Rho-GAP domain. The region spanning 898–1105 (CNDDSADYQH…RDSFSHQNTE (208 aa)) is the START domain.

As to quaternary structure, interacts with EF1A1, facilitates EF1A1 distribution to the membrane periphery and ruffles upon growth factor stimulation and suppresses cell migration. Interacts with tensin TNS1 (via N-terminus); the interaction is decreased by phosphorylation of TNS1. Interacts with TNS3 and PTEN; in resting cells, interacts with TNS3 (via C2 tensin-type domain) but, following growth factor stimulation, TNS3 and PTEN are phosphorylated which leads to weakened interaction with TNS3 and enhanced interaction with PTEN. Interacts (via C-terminus) with tensin TNS4 (via SH2 domain); the interaction is independent of tyrosine phosphorylation of DLC1.

The protein resides in the cytoplasm. Its subcellular location is the cell junction. The protein localises to the focal adhesion. It localises to the membrane. Functionally, functions as a GTPase-activating protein for the small GTPases RHOA, RHOB, RHOC and CDC42, terminating their downstream signaling. This induces morphological changes and detachment through cytoskeletal reorganization, playing a critical role in biological processes such as cell migration and proliferation. Also functions in vivo as an activator of the phospholipase PLCD1. Active DLC1 increases cell migration velocity but reduces directionality. Required for growth factor-induced epithelial cell migration; in resting cells, interacts with TNS3 while PTEN interacts with the p85 regulatory subunit of the PI3K kinase complex but growth factor stimulation induces phosphorylation of TNS3 and PTEN, causing them to change their binding preference so that PTEN interacts with DLC1 and TNS3 interacts with p85. The PTEN-DLC1 complex translocates to the posterior of migrating cells to activate RHOA while the TNS3-p85 complex translocates to the leading edge of migrating cells to promote RAC1 activation. The chain is Rho GTPase-activating protein 7 (DLC1) from Bos taurus (Bovine).